We begin with the raw amino-acid sequence, 505 residues long: SusD-like protein P2 (505 aa).

An N-terminal signal peptide occupies residues 1-17 (MKKYKITFIVLLLTLVG). Cys-18 is lipidated: N-palmitoyl cysteine. A lipid anchor (S-diacylglycerol cysteine) is attached at Cys-18.

This sequence belongs to the SusD family.

It localises to the cell outer membrane. Its function is as follows. Polysaccharide-binding protein probably involved in ulvan degradation. Ulvan is the main polysaccharide component of the Ulvales (green seaweed) cell wall. It is composed of disaccharide building blocks comprising 3-sulfated rhamnose (Rha3S) linked to D-glucuronic acid (GlcA), L-iduronic acid (IduA), or D-xylose (Xyl). The SusD-like protein may mediate ulvan oligomer-binding before transport in the periplasm for further degradation. In Formosa agariphila (strain DSM 15362 / KCTC 12365 / LMG 23005 / KMM 3901 / M-2Alg 35-1), this protein is SusD-like protein P2.